We begin with the raw amino-acid sequence, 419 residues long: Serine hydroxymethyltransferase (419 aa).

Residues L118 and 122–124 (GHL) each bind (6S)-5,6,7,8-tetrahydrofolate. Residue K227 is modified to N6-(pyridoxal phosphate)lysine.

The protein belongs to the SHMT family. In terms of assembly, homodimer. Pyridoxal 5'-phosphate is required as a cofactor.

It localises to the cytoplasm. The catalysed reaction is (6R)-5,10-methylene-5,6,7,8-tetrahydrofolate + glycine + H2O = (6S)-5,6,7,8-tetrahydrofolate + L-serine. It participates in one-carbon metabolism; tetrahydrofolate interconversion. The protein operates within amino-acid biosynthesis; glycine biosynthesis; glycine from L-serine: step 1/1. Catalyzes the reversible interconversion of serine and glycine with tetrahydrofolate (THF) serving as the one-carbon carrier. This reaction serves as the major source of one-carbon groups required for the biosynthesis of purines, thymidylate, methionine, and other important biomolecules. Also exhibits THF-independent aldolase activity toward beta-hydroxyamino acids, producing glycine and aldehydes, via a retro-aldol mechanism. In Chloroflexus aurantiacus (strain ATCC 29364 / DSM 637 / Y-400-fl), this protein is Serine hydroxymethyltransferase.